The chain runs to 793 residues: E3 UFM1-protein ligase 1 (793 aa).

Alanine 2 bears the N-acetylalanine mark. A mediates interaction with DDRGK1 region spans residues 2-200 (ADAWEEIRRL…RGLFSAITRP (199 aa)). The tract at residues 2–212 (ADAWEEIRRL…VNSLVSKYGF (211 aa)) is required for E3 UFM1-protein ligase activity. The tract at residues 121–250 (DQLSEEVNDK…KAVFVPDIYS (130 aa)) is involved in CDK5RAP3-binding. Residues 200 to 400 (PTPVNSLVSK…NPVHLITEED (201 aa)) form a mediates interaction with TRIP4 region. The segment at 410–473 (VNTSKKDKKD…SSHGGKKKPD (64 aa)) is disordered. An Omega-N-methylarginine modification is found at arginine 433. Serine 458 and serine 462 each carry phosphoserine. Residues 490 to 683 (IQDAPEEFIS…QLKVTEDPAL (194 aa)) form a mediates interaction with CDK5RAP3 region. The residue at position 535 (threonine 535) is a Phosphothreonine. The interval 742–765 (NKKTGQGEDPSSDELDKEQHDVTN) is disordered. Phosphoserine is present on residues serine 752 and serine 753.

The protein belongs to the UFL1 family. As to quaternary structure, catalytic component of the UFM1 ribosome E3 ligase (UREL) complex, composed of UFL1, DDRGK1 and CDK5RAP3. Interacts with E2-like enzyme UFC1. Interacts with RELA. Interacts with NBN; promoting recruitment to double-strand breaks following DNA damage. Interacts (when phosphorylated) with YWHAG/14-3-3-gamma; sequestering UFL1 and preventing its association with PDCD1/PD-1 substrate. Ubiquitinated, leading to its degradation by the proteasome. Interaction with CDK5RAP3 protects both proteins against ubiquitination and degradation via the proteasome. In terms of processing, phosphorylated at Ser-462 by ATM, enhancing protein ligase activity and promoting ATM activation in a positive feedback loop. Phosphorylation at Thr-535 by AMPK promotes its interaction with YWHAG/14-3-3-gamma, thereby preventing UFL1 association with PDCD1/PD-1 substrate. In terms of tissue distribution, ubiquitously expressed with higher expression in pancreatic islets and other secretory tissues. In the embryonic brain at 17 dpc, detected in Sox2-positive neural stem cells and in Slc1a3/GLAST-positive radial glia. In perinatal brain, highly expressed in Slc1a3-positive Bergmann glia of the cerebellum. Continues to be expressed in Bergmann glia of adult brain at 16 weeks. Expressed in adult heart. Highly expressed in the intestinal exocrine cells.

Its subcellular location is the endoplasmic reticulum membrane. It is found in the cytoplasm. The protein resides in the cytosol. The protein localises to the nucleus. It localises to the chromosome. Functionally, E3 protein ligase that mediates ufmylation, the covalent attachment of the ubiquitin-like modifier UFM1 to lysine residues on target proteins, and which plays a key role in various processes, such as ribosome recycling, response to DNA damage, interferon response or reticulophagy (also called ER-phagy). Catalyzes ufmylation of many protein, such as CD274/PD-L1, CDK5RAP3, CYB5R3, DDRGK1, EIF6, histone H4, MRE11, P4HB, PDCD1/PD-1, TRIP4, RPN1, RPS20/uS10, RPL10/uL16, RPL26/uL24, SYVN1/HRD1 and TP53/p53. As part of the UREL complex, plays a key role in ribosome recycling by catalyzing mono-ufmylation of RPL26/uL24 subunit of the 60S ribosome. Ufmylation of RPL26/uL24 occurs on free 60S ribosomes following ribosome dissociation: it weakens the junction between post-termination 60S subunits and SEC61 translocons, promoting release and recycling of the large ribosomal subunit from the endoplasmic reticulum membrane. Ufmylation of RPL26/uL24 and subsequent 60S ribosome recycling either take place after normal termination of translation or after ribosome stalling during cotranslational translocation at the endoplasmic reticulum. Involved in reticulophagy in response to endoplasmic reticulum stress by mediating ufmylation of proteins such as CYB5R3 and RPN1, thereby promoting lysosomal degradation of ufmylated proteins. Ufmylation in response to endoplasmic reticulum stress is essential for processes such as hematopoiesis, blood vessel morphogenesis or inflammatory response. Mediates ufmylation of DDRGK1 and CDK5RAP3; the role of these modifications is however unclear: as both DDRGK1 and CDK5RAP3 act as substrate adapters for ufmylation, it is uncertain whether ufmylation of these proteins is a collateral effect or is required for ufmylation. Acts as a negative regulator of T-cell activation by mediating ufmylation and stabilization of PDCD1/PD-1. Also involved in the response to DNA damage: recruited to double-strand break sites following DNA damage and mediates monoufmylation of histone H4 and ufmylation of MRE11. Mediates ufmylation of TP53/p53, promoting its stability. Catalyzes ufmylation of TRIP4, thereby playing a role in nuclear receptor-mediated transcription. Required for hematopoietic stem cell function and hematopoiesis. The polypeptide is E3 UFM1-protein ligase 1 (Mus musculus (Mouse)).